The following is a 149-amino-acid chain: Protein SprT-like (149 aa).

Residues 4 to 143 enclose the SprT-like domain; sequence TDYVKQVSLE…CGLCRGKLLL (140 aa). His-64 is a binding site for Zn(2+). Glu-65 is an active-site residue. Residue His-68 participates in Zn(2+) binding.

The protein belongs to the SprT family. It depends on Zn(2+) as a cofactor.

The protein resides in the cytoplasm. This Streptococcus pneumoniae (strain Taiwan19F-14) protein is Protein SprT-like.